Here is a 398-residue protein sequence, read N- to C-terminus: Proteasome-activating nucleotidase (398 aa).

Residues 3–60 (DSEIQYLLEKLKKLEEDYYKLRELYRRLEDEKKFIESERIRYEREVRRLRSEVERLRS) adopt a coiled-coil conformation. Residues 185–190 (GTGKTL) and histidine 324 contribute to the ATP site. Positions 396 to 398 (MFV) are docks into pockets in the proteasome alpha-ring to cause gate opening.

It belongs to the AAA ATPase family. Homohexamer. The hexameric complex has a two-ring architecture resembling a top hat that caps the 20S proteasome core at one or both ends. Upon ATP-binding, the C-terminus of PAN interacts with the alpha-rings of the proteasome core by binding to the intersubunit pockets.

The protein localises to the cytoplasm. ATPase which is responsible for recognizing, binding, unfolding and translocation of substrate proteins into the archaeal 20S proteasome core particle. Is essential for opening the gate of the 20S proteasome via an interaction with its C-terminus, thereby allowing substrate entry and access to the site of proteolysis. Thus, the C-termini of the proteasomal ATPase function like a 'key in a lock' to induce gate opening and therefore regulate proteolysis. Unfolding activity requires energy from ATP hydrolysis, whereas ATP binding alone promotes ATPase-20S proteasome association which triggers gate opening, and supports translocation of unfolded substrates. This is Proteasome-activating nucleotidase from Archaeoglobus fulgidus (strain ATCC 49558 / DSM 4304 / JCM 9628 / NBRC 100126 / VC-16).